The following is a 124-amino-acid chain: MEIIPFGSADLDNILAREPQRAEYLPFGAVLLDRTGTILKYNRAEGGIANRNPADVIGKNFFNEIAPCAKGKRFHGEFLRFHQTGQVNVMFDYKFAYKGANVGVKIHMKSQPDGQSCWLFVKRV.

One can recognise a PAS domain in the interval 22–85; sequence AEYLPFGAVL…GEFLRFHQTG (64 aa). Position 68 is an S-(4-hydroxycinnamyl)cysteine (Cys-68).

The protein belongs to the photoactive yellow protein family. In terms of processing, the 4-hydroxycinnamic acid (p-coumaric acid) chromophore is covalently bound via a thioester linkage.

Functionally, this photoactive protein is a photoreceptor with kinetics similar to that of rhodopsin. The chain is Photoactive yellow protein (pyp) from Cereibacter sphaeroides (strain ATCC 17023 / DSM 158 / JCM 6121 / CCUG 31486 / LMG 2827 / NBRC 12203 / NCIMB 8253 / ATH 2.4.1.) (Rhodobacter sphaeroides).